We begin with the raw amino-acid sequence, 523 residues long: GMP synthase [glutamine-hydrolyzing] (523 aa).

The 198-residue stretch at 8 to 205 folds into the Glutamine amidotransferase type-1 domain; it reads KILILDFGSQ…VVGICGCECK (198 aa). Catalysis depends on C85, which acts as the Nucleophile. Active-site residues include H179 and E181. A GMPS ATP-PPase domain is found at 206 to 398; that stretch reads WTAENIIEDA…LGLPAEMLNR (193 aa). Residue 233-239 participates in ATP binding; that stretch reads SGGVDSS.

As to quaternary structure, homodimer.

It carries out the reaction XMP + L-glutamine + ATP + H2O = GMP + L-glutamate + AMP + diphosphate + 2 H(+). It participates in purine metabolism; GMP biosynthesis; GMP from XMP (L-Gln route): step 1/1. Functionally, catalyzes the synthesis of GMP from XMP. This is GMP synthase [glutamine-hydrolyzing] from Actinobacillus pleuropneumoniae serotype 3 (strain JL03).